The sequence spans 615 residues: Chaperone protein HscA homolog (615 aa).

It belongs to the heat shock protein 70 family.

Chaperone involved in the maturation of iron-sulfur cluster-containing proteins. Has a low intrinsic ATPase activity which is markedly stimulated by HscB. The polypeptide is Chaperone protein HscA homolog (Aeromonas hydrophila subsp. hydrophila (strain ATCC 7966 / DSM 30187 / BCRC 13018 / CCUG 14551 / JCM 1027 / KCTC 2358 / NCIMB 9240 / NCTC 8049)).